Consider the following 264-residue polypeptide: 3-methyl-2-oxobutanoate hydroxymethyltransferase (264 aa).

Positions 44 and 83 each coordinate Mg(2+). 3-methyl-2-oxobutanoate is bound by residues 44-45 (DS), Asp83, and Lys111. Glu113 contributes to the Mg(2+) binding site. Glu180 acts as the Proton acceptor in catalysis.

This sequence belongs to the PanB family. Homodecamer; pentamer of dimers. It depends on Mg(2+) as a cofactor.

The protein localises to the cytoplasm. It catalyses the reaction 3-methyl-2-oxobutanoate + (6R)-5,10-methylene-5,6,7,8-tetrahydrofolate + H2O = 2-dehydropantoate + (6S)-5,6,7,8-tetrahydrofolate. It participates in cofactor biosynthesis; (R)-pantothenate biosynthesis; (R)-pantoate from 3-methyl-2-oxobutanoate: step 1/2. Its function is as follows. Catalyzes the reversible reaction in which hydroxymethyl group from 5,10-methylenetetrahydrofolate is transferred onto alpha-ketoisovalerate to form ketopantoate. This chain is 3-methyl-2-oxobutanoate hydroxymethyltransferase, found in Marinobacter nauticus (strain ATCC 700491 / DSM 11845 / VT8) (Marinobacter aquaeolei).